The sequence spans 108 residues: uncharacterized protein (108 aa).

Residues 64–84 traverse the membrane as a helical segment; the sequence is LFIIYYYYYLLICLSPHFFPI.

It localises to the membrane. This is an uncharacterized protein from Schizosaccharomyces pombe (strain 972 / ATCC 24843) (Fission yeast).